A 147-amino-acid chain; its full sequence is Large ribosomal subunit protein uL13 (147 aa).

Belongs to the universal ribosomal protein uL13 family. In terms of assembly, part of the 50S ribosomal subunit.

In terms of biological role, this protein is one of the early assembly proteins of the 50S ribosomal subunit, although it is not seen to bind rRNA by itself. It is important during the early stages of 50S assembly. The chain is Large ribosomal subunit protein uL13 from Paenarthrobacter aurescens (strain TC1).